Consider the following 147-residue polypeptide: UPF0178 protein VIBHAR_03247 (147 aa).

It belongs to the UPF0178 family.

The chain is UPF0178 protein VIBHAR_03247 from Vibrio campbellii (strain ATCC BAA-1116).